Reading from the N-terminus, the 189-residue chain is Pyridoxal 5'-phosphate synthase subunit PdxT (189 aa).

46–48 (GES) is a binding site for L-glutamine. The active-site Nucleophile is the Cys78. L-glutamine-binding positions include Arg107 and 136–137 (IR). Active-site charge relay system residues include His173 and Glu175.

Belongs to the glutaminase PdxT/SNO family. As to quaternary structure, in the presence of PdxS, forms a dodecamer of heterodimers. Only shows activity in the heterodimer.

The catalysed reaction is aldehydo-D-ribose 5-phosphate + D-glyceraldehyde 3-phosphate + L-glutamine = pyridoxal 5'-phosphate + L-glutamate + phosphate + 3 H2O + H(+). The enzyme catalyses L-glutamine + H2O = L-glutamate + NH4(+). Its pathway is cofactor biosynthesis; pyridoxal 5'-phosphate biosynthesis. Functionally, catalyzes the hydrolysis of glutamine to glutamate and ammonia as part of the biosynthesis of pyridoxal 5'-phosphate. The resulting ammonia molecule is channeled to the active site of PdxS. This Roseiflexus sp. (strain RS-1) protein is Pyridoxal 5'-phosphate synthase subunit PdxT.